Reading from the N-terminus, the 184-residue chain is Probable cobalt-precorrin-6B C(15)-methyltransferase (decarboxylating) (184 aa).

Residues Thr-12, 36–40 (GCGTG), Asp-59, and Ala-87 each bind S-adenosyl-L-methionine.

This sequence belongs to the methyltransferase superfamily. Archaeal-type CbiT family.

The enzyme catalyses Co-precorrin-6B + S-adenosyl-L-methionine = Co-precorrin-7 + S-adenosyl-L-homocysteine + CO2. It participates in cofactor biosynthesis; adenosylcobalamin biosynthesis; cob(II)yrinate a,c-diamide from sirohydrochlorin (anaerobic route): step 8/10. Its function is as follows. Catalyzes the methylation of C-15 in cobalt-precorrin-6B followed by the decarboxylation of C-12 to form cobalt-precorrin-7. This is Probable cobalt-precorrin-6B C(15)-methyltransferase (decarboxylating) from Methanosarcina acetivorans (strain ATCC 35395 / DSM 2834 / JCM 12185 / C2A).